The sequence spans 151 residues: Cytochrome c-type biogenesis protein CcmE (151 aa).

The Cytoplasmic segment spans residues 1 to 9 (MKGLKKKRR). A helical; Signal-anchor for type II membrane protein membrane pass occupies residues 10–30 (IQIITLAFVALAGSTALIGYA). Residues 31-151 (MRDGINFFRS…FQHTEDQPQG (121 aa)) lie on the Periplasmic side of the membrane. Heme-binding residues include His123 and Tyr127.

Belongs to the CcmE/CycJ family.

It localises to the cell inner membrane. Its function is as follows. Heme chaperone required for the biogenesis of c-type cytochromes. Transiently binds heme delivered by CcmC and transfers the heme to apo-cytochromes in a process facilitated by CcmF and CcmH. The protein is Cytochrome c-type biogenesis protein CcmE of Cereibacter sphaeroides (strain ATCC 17025 / ATH 2.4.3) (Rhodobacter sphaeroides).